Reading from the N-terminus, the 245-residue chain is Nodulation protein G (245 aa).

NAD(+) is bound at residue 11-35 (VTGASGAIGGAIARVLHAQGAIVGL). Serine 139 serves as a coordination point for substrate. Residue tyrosine 152 is the Proton acceptor of the active site.

It belongs to the short-chain dehydrogenases/reductases (SDR) family.

In terms of biological role, proposed to modify Nod factor fatty acyl chain. In Rhizobium meliloti (strain 1021) (Ensifer meliloti), this protein is Nodulation protein G (nodG).